The primary structure comprises 453 residues: Acid phosphatase (453 aa).

The signal sequence occupies residues 1–18 (MFLQNLFLGFLAVVCANA). H69 serves as the catalytic Nucleophile. N-linked (GlcNAc...) asparagine glycosylation is found at N95, N151, N183, N193, N243, and N319. D331 functions as the Proton donor in the catalytic mechanism. Residues N410, N429, and N443 are each glycosylated (N-linked (GlcNAc...) asparagine).

Belongs to the histidine acid phosphatase family.

The protein localises to the secreted. It is found in the cell wall. It catalyses the reaction a phosphate monoester + H2O = an alcohol + phosphate. The sequence is that of Acid phosphatase (pho1) from Schizosaccharomyces pombe (strain 972 / ATCC 24843) (Fission yeast).